The following is a 421-amino-acid chain: 3-phosphoshikimate 1-carboxyvinyltransferase (421 aa).

Lys-21, Ser-22, and Arg-26 together coordinate 3-phosphoshikimate. Lys-21 lines the phosphoenolpyruvate pocket. The phosphoenolpyruvate site is built by Gly-93 and Arg-121. Ser-166, Ser-167, Gln-168, Ser-194, Asp-310, and Lys-337 together coordinate 3-phosphoshikimate. Phosphoenolpyruvate is bound at residue Gln-168. The active-site Proton acceptor is the Asp-310. The phosphoenolpyruvate site is built by Arg-341, Arg-382, and Lys-407.

It belongs to the EPSP synthase family. In terms of assembly, monomer.

Its subcellular location is the cytoplasm. The catalysed reaction is 3-phosphoshikimate + phosphoenolpyruvate = 5-O-(1-carboxyvinyl)-3-phosphoshikimate + phosphate. Its pathway is metabolic intermediate biosynthesis; chorismate biosynthesis. Functionally, catalyzes the transfer of the enolpyruvyl moiety of phosphoenolpyruvate (PEP) to the 5-hydroxyl of shikimate-3-phosphate (S3P) to produce enolpyruvyl shikimate-3-phosphate and inorganic phosphate. In Methanoregula boonei (strain DSM 21154 / JCM 14090 / 6A8), this protein is 3-phosphoshikimate 1-carboxyvinyltransferase.